Reading from the N-terminus, the 249-residue chain is Aquaporin TIP4-1 (249 aa).

At methionine 1 the chain carries N-acetylmethionine. Over 1–20 the chain is Cytoplasmic; the sequence is MKKIELGHHSEAAKPDCIKA. Lysine 3 bears the N6,N6-dimethyllysine mark. A helical transmembrane segment spans residues 21–41; it reads LIVEFITTFLFVFAGVGSAMA. Topologically, residues 42–49 are vacuolar; the sequence is TDSLVGNT. Residues 50 to 70 traverse the membrane as a helical segment; that stretch reads LVGLFAVAVAHAFVVAVMISA. The Cytoplasmic portion of the chain corresponds to 71–105; sequence GHISGGHLNPAVTLGLLLGGHISVFRAFLYWIDQL. Residues 79–81 carry the NPA 1 motif; the sequence is NPA. Residues 106-126 form a helical membrane-spanning segment; it reads LASSAACFLLSYLTGGMGTPV. The Vacuolar portion of the chain corresponds to 127–137; the sequence is HTLASGVSYTQ. A helical membrane pass occupies residues 138 to 158; the sequence is GIIWEIILTFSLLFTVYATIV. Residues 159 to 166 are Cytoplasmic-facing; that stretch reads DPKKGSLD. Residues 167 to 187 form a helical membrane-spanning segment; sequence GFGPLLTGFVVGANILAGGAF. The Vacuolar portion of the chain corresponds to 188 to 212; sequence SGASMNPARSFGPALVSGNWTDHWV. The short motif at 193-195 is the NPA 2 element; that stretch reads NPA. The chain crosses the membrane as a helical span at residues 213 to 233; that stretch reads YWVGPLIGGGLAGFIYENVLI. Over 234–249 the chain is Cytoplasmic; the sequence is DRPHVPVADDEQPLLN.

This sequence belongs to the MIP/aquaporin (TC 1.A.8) family. TIP (TC 1.A.8.10) subfamily. As to expression, expressed in roots.

It localises to the vacuole membrane. In terms of biological role, aquaporins facilitate the transport of water and small neutral solutes across cell membranes. Transports urea in yeast cells in a pH-independent manner. The protein is Aquaporin TIP4-1 (TIP4-1) of Arabidopsis thaliana (Mouse-ear cress).